Reading from the N-terminus, the 206-residue chain is MVNTPLAHDLLWGMTPAQLPADAPQWAIDSLAAGQPVVVRRALSEDGCVAVGVRGRFREQRLAAFMSVDSIACRVSPEALCQVESARDLPVMQALRQLRPVLDDCGWTWGVSGSVGFELASGFTAMHERSDLDLILRTPQLITRNQARKLVAYFEQAICRVDLQLQTPFGAVALREWAGNASRVLLKNAREACLVSDPWNPQEQAA.

Catalysis depends on residues Asp-131 and Asp-133.

This sequence belongs to the MdcG family.

It carries out the reaction apo-[malonate decarboxylase ACP] + 2'-(5''-triphospho-alpha-D-ribosyl)-3'-dephospho-CoA = holo-[malonate decarboxylase ACP] + diphosphate. Its function is as follows. Transfers 2'-(5-triphosphoribosyl)-3'-dephosphocoenzyme-A to the apo-[acyl-carrier-protein] of the malonate decarboxylase to yield holo-[acyl-carrier-protein]. The chain is Phosphoribosyl-dephospho-CoA transferase from Pseudomonas fluorescens (strain Pf0-1).